Consider the following 466-residue polypeptide: Ribulose bisphosphate carboxylase large chain (466 aa).

An N6,N6,N6-trimethyllysine modification is found at K5. The substrate site is built by N114 and T164. Residue K166 is the Proton acceptor of the active site. K168 provides a ligand contact to substrate. Mg(2+)-binding residues include K192, D194, and E195. Residue K192 is modified to N6-carboxylysine. The Proton acceptor role is filled by H285. Residues R286, H318, and S370 each contribute to the substrate site.

This sequence belongs to the RuBisCO large chain family. Type I subfamily. As to quaternary structure, heterohexadecamer of 8 large chains and 8 small chains; disulfide-linked. The disulfide link is formed within the large subunit homodimers. Mg(2+) is required as a cofactor. In terms of processing, the disulfide bond which can form in the large chain dimeric partners within the hexadecamer appears to be associated with oxidative stress and protein turnover.

The protein resides in the plastid. It is found in the chloroplast. The catalysed reaction is 2 (2R)-3-phosphoglycerate + 2 H(+) = D-ribulose 1,5-bisphosphate + CO2 + H2O. The enzyme catalyses D-ribulose 1,5-bisphosphate + O2 = 2-phosphoglycolate + (2R)-3-phosphoglycerate + 2 H(+). Its function is as follows. RuBisCO catalyzes two reactions: the carboxylation of D-ribulose 1,5-bisphosphate, the primary event in carbon dioxide fixation, as well as the oxidative fragmentation of the pentose substrate in the photorespiration process. Both reactions occur simultaneously and in competition at the same active site. This is Ribulose bisphosphate carboxylase large chain from Hedera helix (English ivy).